The primary structure comprises 417 residues: Blood group Rh(CE) polypeptide (417 aa).

11 helical membrane passes run cysteine 12–threonine 32, leucine 44–phenylalanine 64, valine 77–phenylalanine 97, isoleucine 125–valine 145, phenylalanine 172–proline 192, threonine 203–valine 223, methionine 238–leucine 258, isoleucine 265–cysteine 285, leucine 287–glycine 307, isoleucine 331–threonine 351, and methionine 358–leucine 378.

This sequence belongs to the ammonium transporter (TC 2.A.49) family. Rh subfamily. Heterotrimer; a RHCE monomer interacts with a RHAG homodimer. Component of the ankyrin-1 complex in the erythrocyte, composed of ANK1, RHCE, RHAG, SLC4A1, EPB42, GYPA, GYPB and AQP1. Interacts (via the N- and C-terminal) with ANK1 (via ANk 1-5 repeats); mediates the primary membrane attachment site for ANK1. As to expression, restricted to tissues or cell lines expressing erythroid characters. Isoform 4g and isoform RhPI-Alpha are expressed in immature erythroblasts but not in mature erythroblasts.

The protein resides in the membrane. Its function is as follows. Component of the ankyrin-1 complex, a multiprotein complex involved in the stability and shape of the erythrocyte membrane. Mediates the primary membrane attachment site for ANK1 when associated with RHAG. May participate in the ammonium and carbon dioxide transport through the heterotrimer form. The chain is Blood group Rh(CE) polypeptide from Homo sapiens (Human).